The following is a 384-amino-acid chain: Formate-dependent phosphoribosylglycinamide formyltransferase (384 aa).

Residues 14–15 (EL) and glutamate 74 each bind N(1)-(5-phospho-beta-D-ribosyl)glycinamide. Residues arginine 106, lysine 147, 152-157 (SSGKGQ), 187-190 (EEFI), and glutamate 195 contribute to the ATP site. In terms of domain architecture, ATP-grasp spans 111 to 300 (RLAAETLHLP…EFALHVRAVL (190 aa)). Mg(2+)-binding residues include glutamate 259 and glutamate 271. Residues aspartate 278, lysine 348, and 355 to 356 (RR) contribute to the N(1)-(5-phospho-beta-D-ribosyl)glycinamide site.

The protein belongs to the PurK/PurT family. In terms of assembly, homodimer.

The catalysed reaction is N(1)-(5-phospho-beta-D-ribosyl)glycinamide + formate + ATP = N(2)-formyl-N(1)-(5-phospho-beta-D-ribosyl)glycinamide + ADP + phosphate + H(+). Its pathway is purine metabolism; IMP biosynthesis via de novo pathway; N(2)-formyl-N(1)-(5-phospho-D-ribosyl)glycinamide from N(1)-(5-phospho-D-ribosyl)glycinamide (formate route): step 1/1. Functionally, involved in the de novo purine biosynthesis. Catalyzes the transfer of formate to 5-phospho-ribosyl-glycinamide (GAR), producing 5-phospho-ribosyl-N-formylglycinamide (FGAR). Formate is provided by PurU via hydrolysis of 10-formyl-tetrahydrofolate. In Bacillus velezensis (strain DSM 23117 / BGSC 10A6 / LMG 26770 / FZB42) (Bacillus amyloliquefaciens subsp. plantarum), this protein is Formate-dependent phosphoribosylglycinamide formyltransferase.